The sequence spans 116 residues: Ribosome-binding factor A (116 aa).

The protein belongs to the RbfA family. In terms of assembly, monomer. Binds 30S ribosomal subunits, but not 50S ribosomal subunits or 70S ribosomes.

It is found in the cytoplasm. Functionally, one of several proteins that assist in the late maturation steps of the functional core of the 30S ribosomal subunit. Associates with free 30S ribosomal subunits (but not with 30S subunits that are part of 70S ribosomes or polysomes). Required for efficient processing of 16S rRNA. May interact with the 5'-terminal helix region of 16S rRNA. The protein is Ribosome-binding factor A of Staphylococcus epidermidis (strain ATCC 35984 / DSM 28319 / BCRC 17069 / CCUG 31568 / BM 3577 / RP62A).